Consider the following 547-residue polypeptide: Chaperonin GroEL (547 aa).

ATP is bound by residues 30 to 33 (TLGP), Lys51, 87 to 91 (DGTTT), Gly415, and Asp495.

This sequence belongs to the chaperonin (HSP60) family. In terms of assembly, forms a cylinder of 14 subunits composed of two heptameric rings stacked back-to-back. Interacts with the co-chaperonin GroES.

It localises to the cytoplasm. It carries out the reaction ATP + H2O + a folded polypeptide = ADP + phosphate + an unfolded polypeptide.. In terms of biological role, together with its co-chaperonin GroES, plays an essential role in assisting protein folding. The GroEL-GroES system forms a nano-cage that allows encapsulation of the non-native substrate proteins and provides a physical environment optimized to promote and accelerate protein folding. This chain is Chaperonin GroEL, found in Ralstonia nicotianae (strain ATCC BAA-1114 / GMI1000) (Ralstonia solanacearum).